The following is a 144-amino-acid chain: MKSYIAKAQEVERKWYVVDAAGKPLGRVASQVASILRGKNKPTFTPNVDCGDFVIVINAEKVVLTGKKLDQKMLRKHSLYAGGLKETPYREVLEKKPEFAFEEAVRRMLPTGVLGRKMLKKLNVYRGAEHNHAAQKPEVLELRY.

The protein belongs to the universal ribosomal protein uL13 family. As to quaternary structure, part of the 50S ribosomal subunit.

Its function is as follows. This protein is one of the early assembly proteins of the 50S ribosomal subunit, although it is not seen to bind rRNA by itself. It is important during the early stages of 50S assembly. The sequence is that of Large ribosomal subunit protein uL13 from Clostridium perfringens (strain 13 / Type A).